We begin with the raw amino-acid sequence, 893 residues long: Serine/threonine-protein kinase PLK4 (893 aa).

In terms of domain architecture, Protein kinase spans 12–265 (FRVGNLLGKG…LSSVLDHPFM (254 aa)). ATP-binding positions include 18-26 (LGKGSFAGV) and K41. N6-acetyllysine occurs at positions 45 and 46. The active-site Proton acceptor is the D136. Over residues 349–358 (NQEQETSNSG) the composition is skewed to polar residues. Residues 349 to 393 (NQEQETSNSGRGRVIQEAEERPHSRYLRRAHSSDRSETSHGQSRV) form a disordered region. The span at 362–371 (VIQEAEERPH) shows a compositional bias: basic and acidic residues. Residues S403 and S588 each carry the phosphoserine modification. One can recognise a Cryptic POLO box 1 (CPB1) domain in the interval 509-622 (TLRSITSPLT…SRFVQLVRSK (114 aa)). Residues 623–736 (SPKITYFTRY…GRRPSSTSSP (114 aa)) enclose the Cryptic POLO box 2 (CPB2) domain. Residues 730 to 749 (PSSTSSPKALTPPPPVDPNY) are disordered. A POLO box domain is found at 809 to 887 (QLLKSVFVKN…LSSILLMFSN (79 aa)).

Belongs to the protein kinase superfamily. Ser/Thr protein kinase family. CDC5/Polo subfamily. In terms of assembly, homodimer. Interacts with CEP152 (via N-terminus). Interacts with CEP78; this interaction may be important for proper PLK4 localization to the centriole and PLK4-induced overduplication of centrioles. Interacts with CEP131. Interacts simultaneously with TENT5C and CEP192. Interacts with TENT5C; this interaction leads to the TENT5C recruitment in the centrosome. Interacts with CEP85; this interaction may be important in cell migration and centriole assembly. Ubiquitinated; leading to its degradation by the proteasome. Post-translationally, tyrosine-phosphorylated by TEC. In terms of processing, acetylation by KAT2A and KAT2B impairs kinase activity by shifting the kinase to an inactive conformation.

It localises to the cytoplasm. The protein localises to the cytoskeleton. Its subcellular location is the microtubule organizing center. It is found in the centrosome. The protein resides in the centriole. It localises to the nucleus. The protein localises to the nucleolus. Its subcellular location is the cleavage furrow. The enzyme catalyses L-seryl-[protein] + ATP = O-phospho-L-seryl-[protein] + ADP + H(+). It catalyses the reaction L-threonyl-[protein] + ATP = O-phospho-L-threonyl-[protein] + ADP + H(+). Functionally, serine/threonine-protein kinase that plays a central role in centriole duplication. Able to trigger procentriole formation on the surface of the parental centriole cylinder, leading to the recruitment of centriole biogenesis proteins such as SASS6, CPAP, CCP110, CEP135 and gamma-tubulin. When overexpressed, it is able to induce centrosome amplification through the simultaneous generation of multiple procentrioles adjoining each parental centriole during S phase. Phosphorylates 'Ser-151' of FBXW5 during the G1/S transition, leading to inhibit FBXW5 ability to ubiquitinate SASS6. Its central role in centriole replication suggests a possible role in tumorigenesis, centrosome aberrations being frequently observed in tumors. Also involved in deuterosome-mediated centriole amplification in multiciliated that can generate more than 100 centrioles. Also involved in trophoblast differentiation by phosphorylating HAND1, leading to disrupt the interaction between HAND1 and MDFIC and activate HAND1. Phosphorylates CDC25C and CHEK2. Required for the recruitment of STIL to the centriole and for STIL-mediated centriole amplification. Phosphorylates CEP131 and PCM1 which is essential for proper organization and integrity of centriolar satellites. The sequence is that of Serine/threonine-protein kinase PLK4 from Bos taurus (Bovine).